The primary structure comprises 211 residues: Protein-methionine-sulfoxide reductase heme-binding subunit MsrQ (211 aa).

A run of 5 helical transmembrane segments spans residues Leu-17–Ala-37, Phe-54–Ile-74, Leu-82–Val-102, Pro-116–Thr-136, and Phe-153–Ser-173.

It belongs to the MsrQ family. As to quaternary structure, heterodimer of a catalytic subunit (MsrP) and a heme-binding subunit (MsrQ). It depends on FMN as a cofactor. Heme b serves as cofactor.

The protein resides in the cell inner membrane. Its function is as follows. Part of the MsrPQ system that repairs oxidized periplasmic proteins containing methionine sulfoxide residues (Met-O), using respiratory chain electrons. Thus protects these proteins from oxidative-stress damage caused by reactive species of oxygen and chlorine generated by the host defense mechanisms. MsrPQ is essential for the maintenance of envelope integrity under bleach stress, rescuing a wide series of structurally unrelated periplasmic proteins from methionine oxidation, including the primary periplasmic chaperone SurA and the lipoprotein Pal. MsrQ provides electrons for reduction to the reductase catalytic subunit MsrP, using the quinone pool of the respiratory chain. This chain is Protein-methionine-sulfoxide reductase heme-binding subunit MsrQ, found in Escherichia coli (strain SMS-3-5 / SECEC).